The sequence spans 744 residues: Cytoskeleton-associated protein 2-like (744 aa).

5 disordered regions span residues 35–56 (YLKA…GPKK), 76–169 (LQSR…THVE), 182–216 (KENL…SSLA), 317–337 (TVTE…VLQG), and 428–452 (NKTA…GAQT). 3 stretches are compositionally biased toward polar residues: residues 76 to 86 (LQSRPANITRS), 102 to 129 (SESV…STDG), and 137 to 154 (GSLN…VTDQ). Lys195 participates in a covalent cross-link: Glycyl lysine isopeptide (Lys-Gly) (interchain with G-Cter in SUMO1); alternate. A Glycyl lysine isopeptide (Lys-Gly) (interchain with G-Cter in SUMO2); alternate cross-link involves residue Lys195. The span at 199-216 (ESWTINKPQTNQTKSSLA) shows a compositional bias: polar residues. Ser744 bears the Phosphoserine mark.

It belongs to the CKAP2 family. In terms of processing, ubiquitinated by the anaphase promoting complex/cyclosome (APC/C).

It localises to the cytoplasm. It is found in the cytoskeleton. The protein resides in the spindle pole. Microtubule-associated protein required for mitotic spindle formation and cell-cycle progression in neural progenitor cells. This chain is Cytoskeleton-associated protein 2-like (CKAP2L), found in Bos taurus (Bovine).